The following is a 198-amino-acid chain: FMN-dependent NADH:quinone oxidoreductase (198 aa).

Ser10 provides a ligand contact to FMN.

The protein belongs to the azoreductase type 1 family. Homodimer. FMN is required as a cofactor.

It catalyses the reaction 2 a quinone + NADH + H(+) = 2 a 1,4-benzosemiquinone + NAD(+). The catalysed reaction is N,N-dimethyl-1,4-phenylenediamine + anthranilate + 2 NAD(+) = 2-(4-dimethylaminophenyl)diazenylbenzoate + 2 NADH + 2 H(+). Functionally, quinone reductase that provides resistance to thiol-specific stress caused by electrophilic quinones. In terms of biological role, also exhibits azoreductase activity. Catalyzes the reductive cleavage of the azo bond in aromatic azo compounds to the corresponding amines. This chain is FMN-dependent NADH:quinone oxidoreductase, found in Paraburkholderia phymatum (strain DSM 17167 / CIP 108236 / LMG 21445 / STM815) (Burkholderia phymatum).